The sequence spans 304 residues: tRNA pseudouridine synthase B (304 aa).

The active-site Nucleophile is the aspartate 38. A PUA domain is found at 227-302; the sequence is LPKVEIYKDF…RIFKLKKVFK (76 aa).

The protein belongs to the pseudouridine synthase TruB family. Type 1 subfamily.

The enzyme catalyses uridine(55) in tRNA = pseudouridine(55) in tRNA. Functionally, responsible for synthesis of pseudouridine from uracil-55 in the psi GC loop of transfer RNAs. This is tRNA pseudouridine synthase B from Thermosipho melanesiensis (strain DSM 12029 / CIP 104789 / BI429).